The sequence spans 348 residues: 4-hydroxy-2-oxovalerate aldolase 1 (348 aa).

A Pyruvate carboxyltransferase domain is found at 8–260 (ITVHDMTLRD…QTGVDVWAIQ (253 aa)). 16–17 (RD) contacts substrate. Aspartate 17 lines the Mn(2+) pocket. Histidine 20 (proton acceptor) is an active-site residue. Substrate is bound by residues serine 170 and histidine 199. Residues histidine 199 and histidine 201 each coordinate Mn(2+). Tyrosine 290 provides a ligand contact to substrate.

This sequence belongs to the 4-hydroxy-2-oxovalerate aldolase family.

It catalyses the reaction (S)-4-hydroxy-2-oxopentanoate = acetaldehyde + pyruvate. This is 4-hydroxy-2-oxovalerate aldolase 1 from Cupriavidus metallidurans (strain ATCC 43123 / DSM 2839 / NBRC 102507 / CH34) (Ralstonia metallidurans).